The primary structure comprises 765 residues: ATP-dependent RNA helicase DBP4 (765 aa).

Positions 1–14 are enriched in basic residues; the sequence is MAKPRRNNKNKKGQ. Positions 1–24 are disordered; that stretch reads MAKPRRNNKNKKGQSRSQAREKEE. A Q motif motif is present at residues 47-75; that stretch reads SQFSDLPITQETLRGLNESSFMSLTDIQK. Residues 78 to 252 enclose the Helicase ATP-binding domain; sequence IPIALKGEDL…RLSLTNPKRI (175 aa). 91–98 contributes to the ATP binding site; that stretch reads ARTGSGKT. The DEAD box motif lies at 200–203; that stretch reads DEAD. The Helicase C-terminal domain maps to 266–438; it reads SLDQYYIRIP…SIRPQLQSLC (173 aa). 3 disordered regions span residues 493–526, 552–576, and 641–735; these read KGGS…NEAS, NGSQ…RKDH, and KEQK…DKHN. Residues 558–568 show a composition bias toward acidic residues; the sequence is EDEDEEEEDDF. Basic and acidic residues-rich tracts occupy residues 641-653 and 678-688; these read KEQK…RETE and KEVEKRMRDEE.

The protein belongs to the DEAD box helicase family. DDX10/DBP4 subfamily. In terms of assembly, interacts with the U3 and U14 snoRNAs. Associates with pre-ribosomal complexes.

It is found in the nucleus. The protein resides in the nucleolus. It catalyses the reaction ATP + H2O = ADP + phosphate + H(+). In terms of biological role, ATP-dependent RNA helicase required for ribosome biogenesis. Involved in the release of U14 snoRNA in pre-ribosomal complexes. Required for pre-rRNA cleavage at site A2. This Scheffersomyces stipitis (strain ATCC 58785 / CBS 6054 / NBRC 10063 / NRRL Y-11545) (Yeast) protein is ATP-dependent RNA helicase DBP4 (DBP4).